Reading from the N-terminus, the 702-residue chain is Elongation factor G (702 aa).

A tr-type G domain is found at 8-290; that stretch reads SRYRNIGISA…AVIEYLPSPT (283 aa). GTP is bound by residues 17-24, 88-92, and 142-145; these read AHIDAGKT, DTPGH, and NKMD.

This sequence belongs to the TRAFAC class translation factor GTPase superfamily. Classic translation factor GTPase family. EF-G/EF-2 subfamily.

The protein resides in the cytoplasm. Functionally, catalyzes the GTP-dependent ribosomal translocation step during translation elongation. During this step, the ribosome changes from the pre-translocational (PRE) to the post-translocational (POST) state as the newly formed A-site-bound peptidyl-tRNA and P-site-bound deacylated tRNA move to the P and E sites, respectively. Catalyzes the coordinated movement of the two tRNA molecules, the mRNA and conformational changes in the ribosome. This chain is Elongation factor G, found in Edwardsiella ictaluri (strain 93-146).